A 382-amino-acid polypeptide reads, in one-letter code: S-adenosylmethionine synthase (382 aa).

Histidine 15 contributes to the ATP binding site. Aspartate 17 lines the Mg(2+) pocket. Glutamate 43 serves as a coordination point for K(+). 2 residues coordinate L-methionine: glutamate 56 and glutamine 99. Residues 99 to 109 (QSPDINQGVDR) form a flexible loop region. ATP is bound by residues 164 to 166 (DAK), 230 to 231 (RF), aspartate 239, 245 to 246 (RK), alanine 262, and lysine 266. Aspartate 239 lines the L-methionine pocket. Lysine 270 lines the L-methionine pocket.

This sequence belongs to the AdoMet synthase family. As to quaternary structure, homotetramer; dimer of dimers. The cofactor is Mg(2+). It depends on K(+) as a cofactor.

Its subcellular location is the cytoplasm. The enzyme catalyses L-methionine + ATP + H2O = S-adenosyl-L-methionine + phosphate + diphosphate. The protein operates within amino-acid biosynthesis; S-adenosyl-L-methionine biosynthesis; S-adenosyl-L-methionine from L-methionine: step 1/1. In terms of biological role, catalyzes the formation of S-adenosylmethionine (AdoMet) from methionine and ATP. The overall synthetic reaction is composed of two sequential steps, AdoMet formation and the subsequent tripolyphosphate hydrolysis which occurs prior to release of AdoMet from the enzyme. The protein is S-adenosylmethionine synthase of Glaesserella parasuis serovar 5 (strain SH0165) (Haemophilus parasuis).